We begin with the raw amino-acid sequence, 450 residues long: Probable rhamnogalacturonase E (450 aa).

The first 22 residues, 1–22, serve as a signal peptide directing secretion; it reads MTWSTSFLSVHFFAFITTSIHA. Cysteines 43 and 69 form a disulfide. N-linked (GlcNAc...) asparagine glycans are attached at residues Asn54, Asn92, and Asn131. Residue Asp222 is the Proton donor of the active site. The cysteines at positions 224 and 241 are disulfide-linked. Asn242 and Asn257 each carry an N-linked (GlcNAc...) asparagine glycan. The active site involves His297. 2 N-linked (GlcNAc...) asparagine glycosylation sites follow: Asn324 and Asn329. Cystine bridges form between Cys347–Cys353 and Cys375–Cys384.

This sequence belongs to the glycosyl hydrolase 28 family.

It is found in the secreted. Functionally, pectinolytic enzymes consist of four classes of enzymes: pectine lyase, polygalacturonase, pectin methylesterase and rhamnogalacturonase. Hydrolyzes alpha-D-galacturonopyranosyl-(1,2)-alpha-L-rhamnopyranosyl linkages in the backbone of the hairy regions of pectins. The sequence is that of Probable rhamnogalacturonase E (rhgE) from Aspergillus niger.